Here is a 302-residue protein sequence, read N- to C-terminus: Alpha-N-acetyl-neuraminyl-2,3-beta-galactosyl-1,3-N-acetyl-galactosaminide alpha-2,6-sialyltransferase (302 aa).

At 1–6 the chain is on the cytoplasmic side; that stretch reads MKAPGR. Residues 7-27 traverse the membrane as a helical; Signal-anchor for type II membrane protein segment; it reads LVLIILCSVVFSAVYILLCCW. Over 28 to 302 the chain is Lumenal; that stretch reads AGLPLCLATC…VFAHPSWRTE (275 aa). A disulfide bridge links C76 with C225. An N-linked (GlcNAc...) asparagine glycan is attached at N135.

It belongs to the glycosyltransferase 29 family. As to expression, ubiquitous.

The protein localises to the golgi apparatus membrane. It carries out the reaction an alpha-Neu5Ac-(2-&gt;3)-beta-D-Gal-(1-&gt;3)-D-GlcNAc derivative + CMP-N-acetyl-beta-neuraminate = an alpha-Neu5Ac-(2-&gt;3)-beta-D-Gal-(1-&gt;3)-[alpha-Neu5Ac-(2-&gt;6)]-D-GlcNAc derivative + CMP + H(+). It catalyses the reaction N-acetyl-alpha-neuraminosyl-(2-&gt;3)-beta-D-galactosyl-(1-&gt;3)-N-acetyl-D-galactosamine + CMP-N-acetyl-beta-neuraminate = N-acetyl-alpha-neuraminosyl-(2-&gt;3)-beta-D-galactosyl-(1-&gt;3)-[N-acetyl-alpha-neuraminosyl-(2-&gt;6)]-N-acetyl-D-galactosamine + CMP + H(+). The catalysed reaction is a ganglioside GM1b (d18:1(4E)) + CMP-N-acetyl-beta-neuraminate = a ganglioside GD1alpha (d18:1(4E)) + CMP + H(+). The enzyme catalyses 3-O-[alpha-Neu5Ac-(2-&gt;3)-beta-D-Gal-(1-&gt;3)-alpha-D-GalNAc]-L-Ser-[protein] + CMP-N-acetyl-beta-neuraminate = a 3-O-{alpha-Neu5Ac-(2-&gt;3)-beta-D-Gal-(1-&gt;3)-[alpha-Neu5Ac-(2-&gt;6)]-alpha-D-GalNAc}-L-seryl-[protein] + CMP + H(+). It carries out the reaction 3-O-[alpha-Neu5Ac-(2-&gt;3)-beta-D-Gal-(1-&gt;3)-alpha-D-GalNAc]-L-Thr-[protein] + CMP-N-acetyl-beta-neuraminate = a 3-O-{alpha-Neu5Ac-(2-&gt;3)-beta-D-Gal-(1-&gt;3)-[alpha-Neu5Ac-(2-&gt;6)]-alpha-D-GalNAc}-L-threonyl-[protein] + CMP + H(+). It participates in protein modification; protein glycosylation. Its pathway is glycolipid biosynthesis. Transfers the sialyl group (N-acetyl-alpha-neuraminyl or NeuAc) from CMP-NeuAc to the GalNAc residue on the NeuAc-alpha-2,3-Gal-beta-1,3-GalNAc sequence of glycoproteins and glycolipids forming an alpha-2,6-linkage. Produces branched type disialyl structures by transfer of a sialyl group onto a GalNAc residue inside the backbone core chains. Prefers O-glycans to glycoproteins or glycolipids. The sequence is that of Alpha-N-acetyl-neuraminyl-2,3-beta-galactosyl-1,3-N-acetyl-galactosaminide alpha-2,6-sialyltransferase (ST6GALNAC4) from Homo sapiens (Human).